A 485-amino-acid polypeptide reads, in one-letter code: Myocardial zonula adherens protein (485 aa).

Positions 1–18 (MMRYGSAATVTTSETASS) are enriched in low complexity. Disordered stretches follow at residues 1–21 (MMRYGSAATVTTSETASSQKP) and 40–65 (KQEEINRDTSVNADIRSTNERRKKRN).

It belongs to the MYZAP family.

In Xenopus tropicalis (Western clawed frog), this protein is Myocardial zonula adherens protein (myzap).